The chain runs to 218 residues: Hypoxanthine-guanine phosphoribosyltransferase (218 aa).

A2 is subject to N-acetylalanine. GMP is bound at residue K69. K103 is subject to N6-acetyllysine. K115 is covalently cross-linked (Glycyl lysine isopeptide (Lys-Gly) (interchain with G-Cter in SUMO1); alternate). K115 participates in a covalent cross-link: Glycyl lysine isopeptide (Lys-Gly) (interchain with G-Cter in SUMO2); alternate. Residues 134–142, K166, 186–188, and D194 contribute to the GMP site; these read EDIIDTGKT and KFV. D138 functions as the Proton acceptor in the catalytic mechanism. T142 is subject to Phosphothreonine. D194 serves as a coordination point for Mg(2+).

It belongs to the purine/pyrimidine phosphoribosyltransferase family. Homotetramer. The cofactor is Mg(2+).

Its subcellular location is the cytoplasm. The catalysed reaction is IMP + diphosphate = hypoxanthine + 5-phospho-alpha-D-ribose 1-diphosphate. The enzyme catalyses GMP + diphosphate = guanine + 5-phospho-alpha-D-ribose 1-diphosphate. It participates in purine metabolism; IMP biosynthesis via salvage pathway; IMP from hypoxanthine: step 1/1. Its function is as follows. Converts guanine to guanosine monophosphate, and hypoxanthine to inosine monophosphate. Transfers the 5-phosphoribosyl group from 5-phosphoribosylpyrophosphate onto the purine. Plays a central role in the generation of purine nucleotides through the purine salvage pathway. This Canis lupus familiaris (Dog) protein is Hypoxanthine-guanine phosphoribosyltransferase (HPRT1).